The following is a 279-amino-acid chain: MNANSTTTAIGLTSPFEKLSFFPHSSNLILAHLHEIIFSFVFYQLAFSVVAPFLNKVVFRKHYTTIRDPLLKIDFNVHTVSMIQAVVSNTVLLPTLTTPMHYNVVTYTDSYSSMVSSLSAGYFIWDLTMCVRYFKLYGLEFTGHAIGSVYVMLLSLRPFCQPWIGRFLIYEASTPFVNINWFIMQCNAKSKNSIPLWFNVVNGLLLMTVFFVVRICWGSIASALLFRQMWKVRDELPKFSAVTMMSLNIFMNLLNVLWFKKMIRIAKKLAKPAPTSKLD.

Residues 1–32 (MNANSTTTAIGLTSPFEKLSFFPHSSNLILAH) lie on the Extracellular side of the membrane. Residues 33-53 (LHEIIFSFVFYQLAFSVVAPF) traverse the membrane as a helical segment. Residues 54-79 (LNKVVFRKHYTTIRDPLLKIDFNVHT) lie on the Cytoplasmic side of the membrane. One can recognise a TLC domain in the interval 70–271 (LLKIDFNVHT…MIRIAKKLAK (202 aa)). The chain crosses the membrane as a helical span at residues 80 to 100 (VSMIQAVVSNTVLLPTLTTPM). The Extracellular segment spans residues 101–110 (HYNVVTYTDS). The helical transmembrane segment at 111–131 (YSSMVSSLSAGYFIWDLTMCV) threads the bilayer. Over 132 to 135 (RYFK) the chain is Cytoplasmic. A helical membrane pass occupies residues 136–156 (LYGLEFTGHAIGSVYVMLLSL). At 157–162 (RPFCQP) the chain is on the extracellular side. A helical membrane pass occupies residues 163–183 (WIGRFLIYEASTPFVNINWFI). The Cytoplasmic portion of the chain corresponds to 184–192 (MQCNAKSKN). Residues 193-213 (SIPLWFNVVNGLLLMTVFFVV) form a helical membrane-spanning segment. Topologically, residues 214–238 (RICWGSIASALLFRQMWKVRDELPK) are extracellular. Residues 239 to 259 (FSAVTMMSLNIFMNLLNVLWF) traverse the membrane as a helical segment. The Cytoplasmic segment spans residues 260–279 (KKMIRIAKKLAKPAPTSKLD).

The protein belongs to the TMEM56 family.

The protein resides in the membrane. This Saccharomyces cerevisiae (strain ATCC 204508 / S288c) (Baker's yeast) protein is Topoisomerase I damage affected protein 4 (TDA4).